The sequence spans 2505 residues: Fatty acid synthase (2505 aa).

Met1 is modified (N-acetylmethionine). Residues 1–406 (MEEVVIAGMS…GANVHVILQP (406 aa)) enclose the Ketosynthase family 3 (KS3) domain. Lys59 bears the N6-acetyllysine mark. Ser63 is subject to Phosphoserine. Residue Lys70 is modified to N6-acetyllysine. Cys161 (for beta-ketoacyl synthase activity) is an active-site residue. At Ser207 the chain carries Phosphoserine. The For beta-ketoacyl synthase activity role is filled by His293. Lys298 is modified (N6-acetyllysine). The For beta-ketoacyl synthase activity role is filled by His331. The tract at residues 429-817 (RTMEAVQGLL…IDINPNALFP (389 aa)) is acyl and malonyl transferases. At Lys528 the chain carries N6-acetyllysine. Ser581 acts as the For malonyltransferase activity in catalysis. An acyl-CoA is bound by residues 647-648 (DT) and Phe671. An N6-acetyllysine modification is found at Lys673. Phosphoserine is present on Ser725. Arg773 serves as a coordination point for an acyl-CoA. The residue at position 790 (Lys790) is an N6-acetyllysine. The segment at 844 to 966 (IPVAEDFPNG…KVYQWEDPDS (123 aa)) is N-terminal hotdog fold. The PKS/mFAS DH domain maps to 844-1112 (IPVAEDFPNG…TSRRQQEQLV (269 aa)). The active-site Proton acceptor; for dehydratase activity is the His878. Residues 983 to 1112 (VSRLTQGEVY…TSRRQQEQLV (130 aa)) are C-terminal hotdog fold. At Lys993 the chain carries N6-acetyllysine. Residue Asp1032 is the Proton donor; for dehydratase activity of the active site. An N6-acetyllysine modification is found at Lys1276. Residue Cys1464 is modified to S-nitrosocysteine. Phosphoserine is present on residues Ser1578 and Ser1588. The interval 1629–1857 (DVPSSWTLEE…VQVREEEPEA (229 aa)) is enoyl reductase. 1665–1682 (VLIHSGSGGVGQAAISIA) lines the NADP(+) pocket. An N6-(pyridoxal phosphate)lysine; alternate modification is found at Lys1698. Lys1698 bears the N6-acetyllysine; alternate mark. An N6-acetyllysine mark is found at Lys1765, Lys1841, and Lys1989. 1765–1780 (KFDLSNNHPLGMAIFL) serves as a coordination point for NADP(+). Residues 1858–2113 (MLPGAQPTLI…VLAEKKAVAH (256 aa)) are beta-ketoacyl reductase. The residue at position 2085 (Cys2085) is an S-nitrosocysteine. The region spanning 2113-2193 (HGDGEAQRDL…EMSSKAGSDT (81 aa)) is the Carrier domain. Ser2151 is subject to O-(pantetheine 4'-phosphoryl)serine; alternate. Ser2151 carries the post-translational modification Phosphoserine; alternate. Ser2191 and Ser2230 each carry phosphoserine. A thioesterase region spans residues 2202–2505 (NDTSLKQAQL…AEPRVSVREG (304 aa)). The active-site For thioesterase activity is Ser2302. Lys2385 carries the post-translational modification N6-acetyllysine. A Glycyl lysine isopeptide (Lys-Gly) (interchain with G-Cter in SUMO2) cross-link involves residue Lys2443. His2475 (for thioesterase activity) is an active-site residue.

In terms of assembly, homodimer which is arranged in a head to tail fashion. Interacts with CEACAM1; this interaction is insulin and phosphorylation-dependent; reduces fatty-acid synthase activity. In terms of processing, S-nitrosylation of Fatty acid synthase at cysteine residues Cys-1464 or Cys-2085 is important for the enzyme dimerization. In adipocytes, S-nitrosylation of Fatty acid synthase occurs under physiological conditions and gradually increases during adipogenesis.

The protein localises to the cytoplasm. It is found in the melanosome. The catalysed reaction is acetyl-CoA + n malonyl-CoA + 2n NADPH + 2n H(+) = a long-chain fatty acid + (n+1) CoA + n CO2 + 2n NADP(+).. It carries out the reaction holo-[ACP] + acetyl-CoA = acetyl-[ACP] + CoA. The enzyme catalyses holo-[ACP] + malonyl-CoA = malonyl-[ACP] + CoA. It catalyses the reaction a fatty acyl-[ACP] + malonyl-[ACP] + H(+) = a 3-oxoacyl-[ACP] + holo-[ACP] + CO2. The catalysed reaction is a (3R)-hydroxyacyl-[ACP] + NADP(+) = a 3-oxoacyl-[ACP] + NADPH + H(+). It carries out the reaction a (3R)-hydroxyacyl-[ACP] = a (2E)-enoyl-[ACP] + H2O. The enzyme catalyses a 2,3-saturated acyl-[ACP] + NADP(+) = a (2E)-enoyl-[ACP] + NADPH + H(+). It catalyses the reaction hexadecanoyl-[ACP] + H2O = hexadecanoate + holo-[ACP] + H(+). The catalysed reaction is acetyl-[ACP] + malonyl-[ACP] + H(+) = 3-oxobutanoyl-[ACP] + holo-[ACP] + CO2. It carries out the reaction 3-oxobutanoyl-[ACP] + NADPH + H(+) = (3R)-hydroxybutanoyl-[ACP] + NADP(+). The enzyme catalyses (3R)-hydroxybutanoyl-[ACP] = (2E)-butenoyl-[ACP] + H2O. It catalyses the reaction (2E)-butenoyl-[ACP] + NADPH + H(+) = butanoyl-[ACP] + NADP(+). The catalysed reaction is butanoyl-[ACP] + malonyl-[ACP] + H(+) = 3-oxohexanoyl-[ACP] + holo-[ACP] + CO2. It carries out the reaction 3-oxohexanoyl-[ACP] + NADPH + H(+) = (3R)-hydroxyhexanoyl-[ACP] + NADP(+). The enzyme catalyses (3R)-hydroxyhexanoyl-[ACP] = (2E)-hexenoyl-[ACP] + H2O. It catalyses the reaction (2E)-hexenoyl-[ACP] + NADPH + H(+) = hexanoyl-[ACP] + NADP(+). The catalysed reaction is hexanoyl-[ACP] + malonyl-[ACP] + H(+) = 3-oxooctanoyl-[ACP] + holo-[ACP] + CO2. It carries out the reaction 3-oxooctanoyl-[ACP] + NADPH + H(+) = (3R)-hydroxyoctanoyl-[ACP] + NADP(+). The enzyme catalyses (3R)-hydroxyoctanoyl-[ACP] = (2E)-octenoyl-[ACP] + H2O. It catalyses the reaction (2E)-octenoyl-[ACP] + NADPH + H(+) = octanoyl-[ACP] + NADP(+). The catalysed reaction is octanoyl-[ACP] + malonyl-[ACP] + H(+) = 3-oxodecanoyl-[ACP] + holo-[ACP] + CO2. It carries out the reaction 3-oxodecanoyl-[ACP] + NADPH + H(+) = (3R)-hydroxydecanoyl-[ACP] + NADP(+). The enzyme catalyses (3R)-hydroxydecanoyl-[ACP] = (2E)-decenoyl-[ACP] + H2O. It catalyses the reaction (2E)-decenoyl-[ACP] + NADPH + H(+) = decanoyl-[ACP] + NADP(+). The catalysed reaction is decanoyl-[ACP] + malonyl-[ACP] + H(+) = 3-oxododecanoyl-[ACP] + holo-[ACP] + CO2. It carries out the reaction 3-oxododecanoyl-[ACP] + NADPH + H(+) = (3R)-hydroxydodecanoyl-[ACP] + NADP(+). The enzyme catalyses (3R)-hydroxydodecanoyl-[ACP] = (2E)-dodecenoyl-[ACP] + H2O. It catalyses the reaction (2E)-dodecenoyl-[ACP] + NADPH + H(+) = dodecanoyl-[ACP] + NADP(+). The catalysed reaction is dodecanoyl-[ACP] + malonyl-[ACP] + H(+) = 3-oxotetradecanoyl-[ACP] + holo-[ACP] + CO2. It carries out the reaction 3-oxotetradecanoyl-[ACP] + NADPH + H(+) = (3R)-hydroxytetradecanoyl-[ACP] + NADP(+). The enzyme catalyses (3R)-hydroxytetradecanoyl-[ACP] = (2E)-tetradecenoyl-[ACP] + H2O. It catalyses the reaction (2E)-tetradecenoyl-[ACP] + NADPH + H(+) = tetradecanoyl-[ACP] + NADP(+). The catalysed reaction is tetradecanoyl-[ACP] + malonyl-[ACP] + H(+) = 3-oxohexadecanoyl-[ACP] + holo-[ACP] + CO2. It carries out the reaction 3-oxohexadecanoyl-[ACP] + NADPH + H(+) = (3R)-hydroxyhexadecanoyl-[ACP] + NADP(+). The enzyme catalyses (3R)-hydroxyhexadecanoyl-[ACP] = (2E)-hexadecenoyl-[ACP] + H2O. It catalyses the reaction (2E)-hexadecenoyl-[ACP] + NADPH + H(+) = hexadecanoyl-[ACP] + NADP(+). The catalysed reaction is hexadecanoyl-[ACP] + malonyl-[ACP] + H(+) = 3-oxooctadecanoyl-[ACP] + holo-[ACP] + CO2. It carries out the reaction 3-oxooctadecanoyl-[ACP] + NADPH + H(+) = (3R)-hydroxyoctadecanoyl-[ACP] + NADP(+). The enzyme catalyses (3R)-hydroxyoctadecanoyl-[ACP] = (2E)-octadecenoyl-[ACP] + H2O. It catalyses the reaction (2E)-octadecenoyl-[ACP] + NADPH + H(+) = octadecanoyl-[ACP] + NADP(+). The catalysed reaction is tetradecanoyl-[ACP] + H2O = tetradecanoate + holo-[ACP] + H(+). It carries out the reaction octadecanoyl-[ACP] + H2O = octadecanoate + holo-[ACP] + H(+). The protein operates within lipid metabolism; fatty acid biosynthesis. Its activity is regulated as follows. Cerulenin, a potent non-competitive pharmacological inhibitor of FAS, binds covalently to the active site of the condensing enzyme region, inactivating a key enzyme step in fatty acid synthesis. Another inhibitor, though less efficient, is C75, a member of the alpha-methylene-gamma-butyrolactone chemical class, also proposed as an antitumour and anti-obesity agent. Fatty acid synthetase is a multifunctional enzyme that catalyzes the de novo biosynthesis of long-chain saturated fatty acids starting from acetyl-CoA and malonyl-CoA in the presence of NADPH. This multifunctional protein contains 7 catalytic activities and a site for the binding of the prosthetic group 4'-phosphopantetheine of the acyl carrier protein ([ACP]) domain. The chain is Fatty acid synthase (Fasn) from Rattus norvegicus (Rat).